The primary structure comprises 591 residues: Aspartate--tRNA(Asp/Asn) ligase (591 aa).

An L-aspartate-binding site is contributed by Glu174. Residues 198-201 (QLFK) are aspartate. Arg220 is an L-aspartate binding site. ATP contacts are provided by residues 220 to 222 (RDE) and Gln229. His450 is an L-aspartate binding site. Glu483 is an ATP binding site. Arg490 serves as a coordination point for L-aspartate. Residue 535 to 538 (GLDR) coordinates ATP.

The protein belongs to the class-II aminoacyl-tRNA synthetase family. Type 1 subfamily. As to quaternary structure, homodimer.

Its subcellular location is the cytoplasm. The enzyme catalyses tRNA(Asx) + L-aspartate + ATP = L-aspartyl-tRNA(Asx) + AMP + diphosphate. Functionally, aspartyl-tRNA synthetase with relaxed tRNA specificity since it is able to aspartylate not only its cognate tRNA(Asp) but also tRNA(Asn). Reaction proceeds in two steps: L-aspartate is first activated by ATP to form Asp-AMP and then transferred to the acceptor end of tRNA(Asp/Asn). This chain is Aspartate--tRNA(Asp/Asn) ligase, found in Pseudomonas fluorescens (strain ATCC BAA-477 / NRRL B-23932 / Pf-5).